Reading from the N-terminus, the 671-residue chain is UvrABC system protein B (671 aa).

The Helicase ATP-binding domain maps to 26–183; it reads EGLENGLAHQ…RRLSELQYSR (158 aa). 39-46 contributes to the ATP binding site; it reads GVTGSGKT. Positions 92 to 115 match the Beta-hairpin motif; that stretch reads YYDYYQPEAYVPSSDTFIEKDASV. Positions 431-593 constitute a Helicase C-terminal domain; sequence QVDDLLSEIR…IIPQGLNKKI (163 aa). The UVR domain maps to 631-666; the sequence is DQKIRELEAKMYTYAQNLEFEQAAELRDQVHQLRQQ.

It belongs to the UvrB family. Forms a heterotetramer with UvrA during the search for lesions. Interacts with UvrC in an incision complex.

It is found in the cytoplasm. Its function is as follows. The UvrABC repair system catalyzes the recognition and processing of DNA lesions. A damage recognition complex composed of 2 UvrA and 2 UvrB subunits scans DNA for abnormalities. Upon binding of the UvrA(2)B(2) complex to a putative damaged site, the DNA wraps around one UvrB monomer. DNA wrap is dependent on ATP binding by UvrB and probably causes local melting of the DNA helix, facilitating insertion of UvrB beta-hairpin between the DNA strands. Then UvrB probes one DNA strand for the presence of a lesion. If a lesion is found the UvrA subunits dissociate and the UvrB-DNA preincision complex is formed. This complex is subsequently bound by UvrC and the second UvrB is released. If no lesion is found, the DNA wraps around the other UvrB subunit that will check the other stand for damage. This Yersinia pestis bv. Antiqua (strain Antiqua) protein is UvrABC system protein B.